Reading from the N-terminus, the 822-residue chain is Calpain-3 (822 aa).

Residues 1-36 (MPTVISASVAPRTGAEPRSPGPIAQAAQGKGTEAGG) are disordered. The 345-residue stretch at 74-418 (LFVDPEFPPD…FTKLEICNLT (345 aa)) folds into the Calpain catalytic domain. Active-site residues include Cys129, His335, and Asn359. Residues 419-587 (ADALESDKLQ…KRNLSEEVEN (169 aa)) are domain III. The linker stretch occupies residues 588–649 (TISVDRPVKK…LKPGNIDQES (62 aa)). Residues 600-651 (PKPIIFGSDRANSNKELGVDQESEEGKDNTSPDKQAKSPQLKPGNIDQESKE) are disordered. Residues 623-635 (EEGKDNTSPDKQA) show a composition bias toward basic and acidic residues. 4 EF-hand domains span residues 650–684 (KEQR…VVNK), 693–726 (FTLE…KKIK), 723–758 (KKIK…AGFH), and 788–822 (VRLE…TMYA). The tract at residues 650 to 822 (KEQRQFRNIF…LEWLQLTMYA (173 aa)) is domain IV. Residues Ala663, Asp666, Glu668, Glu673, Asp706, Asp708, Ser710, Arg712, Glu717, Asp736, Asp738, Ser740, Thr742, Glu747, Asp801, Asp803, Asp805, and Ile807 each coordinate Ca(2+).

The protein belongs to the peptidase C2 family. As to quaternary structure, homodimer; via EF-hand domain 4. Interacts with TTN/titin. Interacts with CMYA5; this interaction, which results in CMYA5 proteolysis, may protect CAPN3 from autolysis. Interacts with SIMC1. Interacts with UTP25; the interaction is required for CAPN3 translocation to the nucleolus. Skeletal muscle.

It is found in the cytoplasm. It localises to the nucleus. The protein resides in the nucleolus. It carries out the reaction Broad endopeptidase activity.. With respect to regulation, activated by micromolar concentrations of calcium and inhibited by calpastatin. Its function is as follows. Calcium-regulated non-lysosomal thiol-protease. Proteolytically cleaves CTBP1. Mediates, with UTP25, the proteasome-independent degradation of p53/TP53. The chain is Calpain-3 (CAPN3) from Ovis aries (Sheep).